The following is a 1906-amino-acid chain: A disintegrin and metalloproteinase with thrombospondin motifs 20 (1906 aa).

Positions methionine 1–phenylalanine 26 are cleaved as a signal peptide. Positions histidine 27–arginine 249 are excised as a propeptide. Residues asparagine 92 and asparagine 221 are each glycosylated (N-linked (GlcNAc...) asparagine). The interval proline 201–threonine 222 is disordered. Positions arginine 255 to proline 464 constitute a Peptidase M12B domain. 11 disulfides stabilise this stretch: cysteine 330–cysteine 383, cysteine 359–cysteine 365, cysteine 377–cysteine 459, cysteine 415–cysteine 443, cysteine 486–cysteine 508, cysteine 497–cysteine 518, cysteine 503–cysteine 537, cysteine 531–cysteine 542, cysteine 565–cysteine 602, cysteine 569–cysteine 607, and cysteine 580–cysteine 592. A Zn(2+)-binding site is contributed by histidine 399. Glutamate 400 is a catalytic residue. Positions 403 and 409 each coordinate Zn(2+). The Disintegrin domain occupies asparagine 465–valine 552. The TSP type-1 1 domain occupies aspartate 553 to proline 608. N-linked (GlcNAc...) asparagine glycans are attached at residues asparagine 714, asparagine 798, and asparagine 805. Residues alanine 721–asparagine 842 are spacer. TSP type-1 domains lie at leucine 843 to glutamate 901, isoleucine 906 to valine 962, valine 962 to glutamate 1015, proline 1017 to alanine 1074, serine 1075 to leucine 1131, arginine 1148 to serine 1202, and proline 1203 to proline 1260. A glycan (N-linked (GlcNAc...) asparagine) is linked at asparagine 1057. Residues arginine 1265–alanine 1295 are disordered. Over residues alanine 1266 to proline 1277 the composition is skewed to polar residues. TSP type-1 domains are found at residues arginine 1300–glycine 1351, proline 1354–proline 1411, glutamate 1412–arginine 1465, arginine 1468–methionine 1526, arginine 1527–lysine 1584, tyrosine 1585–cysteine 1648, and histidine 1650–lysine 1706. N-linked (GlcNAc...) asparagine glycosylation is present at asparagine 1562. The region spanning leucine 1707 to leucine 1906 is the GON domain. N-linked (GlcNAc...) asparagine glycans are attached at residues asparagine 1719, asparagine 1759, and asparagine 1777.

Zn(2+) serves as cofactor. Post-translationally, the precursor is cleaved by a furin endopeptidase. Glycosylated. Can be O-fucosylated by POFUT2 on a serine or a threonine residue found within the consensus sequence C1-X(2)-(S/T)-C2-G of the TSP type-1 repeat domains where C1 and C2 are the first and second cysteine residue of the repeat, respectively. Fucosylated repeats can then be further glycosylated by the addition of a beta-1,3-glucose residue by the glucosyltransferase, B3GALTL. Fucosylation mediates the efficient secretion of ADAMTS family members. Can also be C-glycosylated with one or two mannose molecules on tryptophan residues within the consensus sequence W-X-X-W of the TPRs, and N-glycosylated. These other glycosylations can also facilitate secretion. As to expression, expressed at low level in testis and brain.

The protein resides in the secreted. It is found in the extracellular space. The protein localises to the extracellular matrix. Functionally, may play a role in tissue-remodeling process occurring in both normal and pathological conditions. May have a protease-independent function in the transport from the endoplasmic reticulum to the Golgi apparatus of secretory cargos, mediated by the GON domain. This Mus musculus (Mouse) protein is A disintegrin and metalloproteinase with thrombospondin motifs 20 (Adamts20).